Here is a 103-residue protein sequence, read N- to C-terminus: MSGELSSICGGLPPELCEQLAREQQIIKIKLEKRRYGREVTIIEGLDEREVNLKKLASELKSRLATGGTYKNGRIELQGDHRHRVKEILVEMGFPEENIIIVE.

The protein belongs to the SUI1 family.

This is Protein translation factor SUI1 homolog from Hyperthermus butylicus (strain DSM 5456 / JCM 9403 / PLM1-5).